The primary structure comprises 155 residues: Ribosomal RNA large subunit methyltransferase H (155 aa).

S-adenosyl-L-methionine-binding positions include Gly104 and 123–128 (LGPMTF).

This sequence belongs to the RNA methyltransferase RlmH family. Homodimer.

The protein localises to the cytoplasm. It catalyses the reaction pseudouridine(1915) in 23S rRNA + S-adenosyl-L-methionine = N(3)-methylpseudouridine(1915) in 23S rRNA + S-adenosyl-L-homocysteine + H(+). Its function is as follows. Specifically methylates the pseudouridine at position 1915 (m3Psi1915) in 23S rRNA. This is Ribosomal RNA large subunit methyltransferase H from Nitratidesulfovibrio vulgaris (strain DSM 19637 / Miyazaki F) (Desulfovibrio vulgaris).